The chain runs to 129 residues: MYFLYVGVFGALGGMCRYAMNLWLGGGDFPSATLAVNLIGCFLLAFLMQFLAEKSRISLVILNGIGTGFIGAFTTFSAFSVDTIQLVQSGAWLFAVSYVLASFIGGLIMVKFGRMLSNKLLNRGEHRVS.

4 helical membrane-spanning segments follow: residues 3–23 (FLYV…MNLW), 32–52 (ATLA…QFLA), 59–79 (LVIL…FSAF), and 90–110 (GAWL…LIMV). Residues Gly71 and Thr74 each coordinate Na(+).

It belongs to the fluoride channel Fluc/FEX (TC 1.A.43) family.

The protein resides in the cell membrane. It carries out the reaction fluoride(in) = fluoride(out). Its activity is regulated as follows. Na(+) is not transported, but it plays an essential structural role and its presence is essential for fluoride channel function. Its function is as follows. Fluoride-specific ion channel. Important for reducing fluoride concentration in the cell, thus reducing its toxicity. The sequence is that of Fluoride-specific ion channel FluC 2 from Listeria monocytogenes serotype 4b (strain F2365).